We begin with the raw amino-acid sequence, 319 residues long: Acetyl esterase (319 aa).

The Involved in the stabilization of the negatively charged intermediate by the formation of the oxyanion hole signature appears at 91-93 (HGG). Residues serine 165, aspartate 262, and histidine 292 contribute to the active site.

Belongs to the 'GDXG' lipolytic enzyme family. Homodimer. Interacts with MalT and MelA.

Its subcellular location is the cytoplasm. Functionally, displays esterase activity towards short chain fatty esters (acyl chain length of up to 8 carbons). Able to hydrolyze triacetylglycerol (triacetin) and tributyrylglycerol (tributyrin), but not trioleylglycerol (triolein) or cholesterol oleate. Negatively regulates MalT activity by antagonizing maltotriose binding. Inhibits MelA galactosidase activity. In Escherichia coli O6:H1 (strain CFT073 / ATCC 700928 / UPEC), this protein is Acetyl esterase.